We begin with the raw amino-acid sequence, 240 residues long: Small ribosomal subunit protein uS3 (240 aa).

One can recognise a KH type-2 domain in the interval 39-109 (IRQHIDANLN…QIRINVVEVN (71 aa)). The disordered stretch occupies residues 216–240 (TSAANAAPLPRRKSRRQQFEDRSEQ).

The protein belongs to the universal ribosomal protein uS3 family. In terms of assembly, part of the 30S ribosomal subunit. Forms a tight complex with proteins S10 and S14.

Binds the lower part of the 30S subunit head. Binds mRNA in the 70S ribosome, positioning it for translation. The chain is Small ribosomal subunit protein uS3 from Picosynechococcus sp. (strain ATCC 27264 / PCC 7002 / PR-6) (Agmenellum quadruplicatum).